The sequence spans 190 residues: Apolipoprotein M (190 aa).

The not cleaved signal peptide spans 1-22 (MFHQVWAALLSLYGLLFNSMNQ). 3 disulfide bridges follow: cysteine 23-cysteine 169, cysteine 95-cysteine 185, and cysteine 130-cysteine 159. Positions 138 and 145 each coordinate tetradecanoate.

This sequence belongs to the calycin superfamily. Lipocalin family. Highly divergent. In terms of assembly, interacts with LRP2; LRP2 mediates APOM renal uptake and subsequent lysosomal degradation. Expressed by the liver; secreted in plasma.

The protein localises to the secreted. Functionally, probably involved in lipid transport. Can bind sphingosine-1-phosphate, myristic acid, palmitic acid and stearic acid, retinol, all-trans-retinoic acid and 9-cis-retinoic acid. The chain is Apolipoprotein M (Apom) from Mus musculus (Mouse).